Consider the following 213-residue polypeptide: Glycerol-3-phosphate acyltransferase (213 aa).

6 helical membrane passes run 3 to 23 (ILLL…LWIG), 54 to 76 (TITF…WLGI), 83 to 100 (IIGF…FTGF), 110 to 130 (AGVL…VFAL), 142 to 162 (SITA…IHFL), and 163 to 183 (LDGY…VIIF).

This sequence belongs to the PlsY family. As to quaternary structure, probably interacts with PlsX.

Its subcellular location is the cell membrane. The catalysed reaction is an acyl phosphate + sn-glycerol 3-phosphate = a 1-acyl-sn-glycero-3-phosphate + phosphate. The protein operates within lipid metabolism; phospholipid metabolism. Catalyzes the transfer of an acyl group from acyl-phosphate (acyl-PO(4)) to glycerol-3-phosphate (G3P) to form lysophosphatidic acid (LPA). This enzyme utilizes acyl-phosphate as fatty acyl donor, but not acyl-CoA or acyl-ACP. The protein is Glycerol-3-phosphate acyltransferase of Streptococcus thermophilus (strain ATCC BAA-491 / LMD-9).